The chain runs to 465 residues: Pancreatic triacylglycerol lipase (465 aa).

The N-terminal stretch at 1–16 is a signal peptide; the sequence is MLLLWALPLLLGAVAG. 2 cysteine pairs are disulfide-bonded: Cys-20–Cys-26 and Cys-108–Cys-119. The active-site Nucleophile is Ser-170. Asp-194 acts as the Charge relay system in catalysis. Ca(2+) is bound by residues Glu-205, Arg-208, Asp-210, and Asp-213. Cys-255 and Cys-279 are oxidised to a cystine. The active-site Charge relay system is His-281. Disulfide bonds link Cys-303/Cys-314, Cys-317/Cys-321, and Cys-449/Cys-465. Positions 355–465 constitute a PLAT domain; that stretch reads WRYQVAVTLS…EDILLTLTPC (111 aa).

The protein belongs to the AB hydrolase superfamily. Lipase family. In terms of assembly, forms a 1:1 stoichiometric complex with (pro)colipase/CLPS.

The protein localises to the secreted. The enzyme catalyses a triacylglycerol + H2O = a diacylglycerol + a fatty acid + H(+). It carries out the reaction 1,2,3-tributanoylglycerol + H2O = dibutanoylglycerol + butanoate + H(+). The catalysed reaction is 1,2,3-tri-(9Z-octadecenoyl)-glycerol + H2O = di-(9Z)-octadecenoylglycerol + (9Z)-octadecenoate + H(+). It catalyses the reaction all-trans-retinyl hexadecanoate + H2O = all-trans-retinol + hexadecanoate + H(+). The enzyme catalyses 1,2-di-(9Z-octadecenoyl)-glycerol + H2O = (9Z-octadecenoyl)-glycerol + (9Z)-octadecenoate + H(+). With respect to regulation, inhibited by bile salts, is reactivated by (pro)colipase/CLPS. Its function is as follows. Plays an important role in fat metabolism. It preferentially splits the esters of long-chain fatty acids at positions 1 and 3, producing mainly 2-monoacylglycerol and free fatty acids, and shows considerably higher activity against insoluble emulsified substrates than against soluble ones. This Oryctolagus cuniculus (Rabbit) protein is Pancreatic triacylglycerol lipase (PNLIP).